We begin with the raw amino-acid sequence, 543 residues long: Protein DETOXIFICATION 47, chloroplastic (543 aa).

The transit peptide at 1–30 directs the protein to the chloroplast; the sequence is MLIKSQRLTLFSPLLSKTRRIPVNSHQTLV. Positions 55-94 form a coiled coil; the sequence is VIRRRIKLERVTRNCVRIDREIDEEEEEEEKERGDLVKQS. Transmembrane regions (helical) follow at residues 107 to 127, 135 to 155, 181 to 201, 228 to 248, 256 to 276, 278 to 298, 319 to 339, 342 to 362, 406 to 426, 443 to 463, 472 to 492, and 497 to 517; these read GPAMGMWICGPLMSLIDTVVI, LAALGPGTVLCDHMSYVFMFL, VLLFIGLVCGLMMLLLTRLFG, GLAWPFILVGLVAQSASLGMK, ALAAATIINGLGDTILCLFLG, GIAGAAWATTASQIVSAYMMM, LWKISALAAPVFISIFSKIAF, FIIYCATSMGTHVLAAHQVMA, IIGATLGLVLGVIGTAVPGLF, LLIPFFMALSALPMTVSLEGT, FVSSVMSSSFIIGCLTLMFVT, and GLLGCWFVLVGFQWGRFGLYL.

Belongs to the multi antimicrobial extrusion (MATE) (TC 2.A.66.1) family. As to expression, preferentially expressed in the epidermal cells.

The protein resides in the plastid. It localises to the chloroplast membrane. Its function is as follows. Functions as a multidrug and toxin extrusion transporter in the export of salicylic acid (SA) from the chloroplast to the cytoplasm. Plays an essential function in plant defense via the pathogen-induced salicylic acid (SA) accumulation. Also acts as a key component of the Age-related resistance (ARR) pathway. The protein is Protein DETOXIFICATION 47, chloroplastic of Arabidopsis thaliana (Mouse-ear cress).